Here is a 306-residue protein sequence, read N- to C-terminus: Ornithine carbamoyltransferase (306 aa).

Residues 51–54, Q78, R102, and 129–132 contribute to the carbamoyl phosphate site; these read STRT and HPVQ. Residues N157, D221, and 225-226 each bind L-ornithine; that span reads SM. Residues 261–262 and R289 contribute to the carbamoyl phosphate site; that span reads CL.

This sequence belongs to the aspartate/ornithine carbamoyltransferase superfamily. OTCase family.

It localises to the cytoplasm. The enzyme catalyses carbamoyl phosphate + L-ornithine = L-citrulline + phosphate + H(+). It participates in amino-acid biosynthesis; L-arginine biosynthesis; L-arginine from L-ornithine and carbamoyl phosphate: step 1/3. In terms of biological role, reversibly catalyzes the transfer of the carbamoyl group from carbamoyl phosphate (CP) to the N(epsilon) atom of ornithine (ORN) to produce L-citrulline. The protein is Ornithine carbamoyltransferase of Campylobacter hominis (strain ATCC BAA-381 / DSM 21671 / CCUG 45161 / LMG 19568 / NCTC 13146 / CH001A).